The following is a 703-amino-acid chain: Leucine zipper putative tumor suppressor 3 (703 aa).

3 disordered regions span residues 1–22 (MAPA…PHLF), 40–190 (RADP…SEPL), and 204–347 (FHSM…PPSP). Low complexity predominate over residues 96-107 (GSFPGPRSSGSG). Over residues 109-124 (NRERPGPGRYPSEDKV) the composition is skewed to basic and acidic residues. Positions 205–218 (HSMQNLCPPQTNGT) are enriched in polar residues. Residues 251-268 (DSGRNSLTSLPTYSSSYS) show a composition bias toward low complexity. Residues 290–299 (SSGGGGGGSG) are compositionally biased toward gly residues. Residues 304–324 (GTSDSGRASSKSGSSSSMGRS) are compositionally biased toward low complexity. The segment covering 325-336 (GHLGSGEGGNGG) has biased composition (gly residues). 2 positions are modified to phosphoserine: serine 346 and serine 348. 2 coiled-coil regions span residues 348 to 526 (SALI…SLRD) and 600 to 669 (TRAL…RLRE). The interval 665–703 (RRLRERGAAGGSRTPTPQHGEEEKAWTPSRLERIESTEI) is disordered. Positions 683–703 (HGEEEKAWTPSRLERIESTEI) are enriched in basic and acidic residues.

Belongs to the LZTS3 family. As to quaternary structure, interacts (via C-terminus) with SHANK3 (via PDZ domain). Interacts (via coiled coil) with SIPA1L1. Can form homooligomers. As to expression, detected in brain, with highest expression in brain cortex, caudate putamen, cerebellum and hippocampus. Detected in neuropil (at protein level). Detected in brain and kidney.

Its subcellular location is the synapse. The protein resides in the postsynaptic density. The protein localises to the cell projection. It is found in the dendritic spine. It localises to the dendrite. Its subcellular location is the cytoplasm. The protein resides in the cytoskeleton. Its function is as follows. May be involved in promoting the maturation of dendritic spines, probably via regulating SIPA1L1 levels at the postsynaptic density of synapses. The protein is Leucine zipper putative tumor suppressor 3 of Rattus norvegicus (Rat).